The following is a 1054-amino-acid chain: Disks large-associated protein 2 (1054 aa).

2 disordered regions span residues 32–87 (EPEE…SGSR) and 242–301 (SHSL…SDDN). Positions 242–255 (SHSLEGSSKSNANG) are enriched in polar residues. Positions 267–281 (HAHHAKHSKRSKSKE) are enriched in basic residues. The segment covering 289 to 299 (RPGMSSWWSSD) has biased composition (low complexity). 4 positions are modified to phosphoserine: serine 298, serine 304, serine 386, and serine 452. 2 disordered regions span residues 442–464 (GDEESGESDSSPKTSPKSAILPE) and 609–666 (YKKT…TDSL). Over residues 628–641 (VTAQSSTESTQDAY) the composition is skewed to polar residues. A phosphoserine mark is found at serine 662, serine 665, serine 668, and serine 715. The disordered stretch occupies residues 719-746 (QDSEFPEHQPYPRSDVETATDSDTESRG). A Phosphothreonine modification is found at threonine 738. Serine 740, serine 771, serine 806, serine 978, and serine 1007 each carry phosphoserine. 2 stretches are compositionally biased toward basic and acidic residues: residues 977–987 (ESPERKEERKV) and 1002–1020 (ITREKSLDLPDRQRQEARR). Positions 977 to 1021 (ESPERKEERKVPPPIPKKPPKGKFPITREKSLDLPDRQRQEARRR) are disordered.

This sequence belongs to the SAPAP family. Interacts with DLG1 and DLG4/PSD-95. Expressed in brain and kidney.

It localises to the cell membrane. It is found in the postsynaptic density. Its subcellular location is the synapse. Its function is as follows. May play a role in the molecular organization of synapses and neuronal cell signaling. Could be an adapter protein linking ion channel to the subsynaptic cytoskeleton. May induce enrichment of PSD-95/SAP90 at the plasma membrane. The sequence is that of Disks large-associated protein 2 from Homo sapiens (Human).